A 147-amino-acid polypeptide reads, in one-letter code: Delta-latroinsectotoxin-Lhe1a (147 aa).

ANK repeat units follow at residues 57–59, 66–78, 79–96, and 98–125; these read VSI, NNWT…IYFK, KNPA…DIEA, and TSIM…TLDE.

The protein belongs to the cationic peptide 01 (latrotoxin) family. 04 (delta-latroinsectotoxin) subfamily. As to quaternary structure, homotetramer in membrane. In terms of tissue distribution, expressed by the venom gland.

The protein localises to the secreted. It is found in the target cell membrane. Functionally, insecticidal presynaptic neurotoxin that induces massive neurotransmitter release at insect (but not vertebrate) neuromuscular junctions. Native toxin forms cation-permeable pores (with high permeability to calcium) in lipid membranes locust muscle membrane and artificial lipid bilayers. May bind to insect neurexin-1 homolog, insect adhesion G protein-coupled receptor L1 homolog, and insect receptor-type tyrosine-protein phosphatase S homolog, and induces neurotransmitter exocytosis both by forming tetrameric pores in membranes and signaling via G protein-coupled receptor. Oligomerization is a process independent of divalent cations. The polypeptide is Delta-latroinsectotoxin-Lhe1a (Latrodectus hesperus (Western black widow spider)).